The primary structure comprises 243 residues: Coenzyme F420 hydrogenase subunit gamma (243 aa).

2 4Fe-4S ferredoxin-type domains span residues 182 to 210 and 211 to 241; these read IKEVINKSLCMGCGTCAAACQVNAIDMVE and AKPNINSEFCIKCGICSAQCPRVRFPEIIRK. 8 residues coordinate [4Fe-4S] cluster: C191, C194, C197, C201, C220, C223, C226, and C230.

This sequence belongs to the FrhG family. Complex of alpha, beta and gamma subunits. Ni(2+) serves as cofactor. The cofactor is iron-sulfur cluster. Requires FAD as cofactor.

The catalysed reaction is oxidized coenzyme F420-(gamma-L-Glu)(n) + H2 + H(+) = reduced coenzyme F420-(gamma-L-Glu)(n). In terms of biological role, reduces the physiological low-potential two-electron acceptor coenzyme F420, and the artificial one-electron acceptor methylviologen. This chain is Coenzyme F420 hydrogenase subunit gamma (frhG), found in Methanococcus voltae.